We begin with the raw amino-acid sequence, 133 residues long: Triatox (133 aa).

The first 22 residues, 1–22 (MTTLRVLLAVCCAAYCILAEDV), serve as a signal peptide directing secretion. One can recognise a CUB domain in the interval 23–125 (TVPANGELKL…RAMCTVYSAE (103 aa)). Cys70 and Cys86 are disulfide-bonded.

It belongs to the venom CUB family. Expressed by the venom gland.

Its subcellular location is the secreted. May function as an antimicrobial peptide and may be related to the innate defense of the insect in the salivary glands. This Triatoma infestans (Assassin bug) protein is Triatox.